The chain runs to 140 residues: Transcription antitermination protein NusB (140 aa).

The protein belongs to the NusB family.

Involved in transcription antitermination. Required for transcription of ribosomal RNA (rRNA) genes. Binds specifically to the boxA antiterminator sequence of the ribosomal RNA (rrn) operons. This is Transcription antitermination protein NusB from Alteromonas mediterranea (strain DSM 17117 / CIP 110805 / LMG 28347 / Deep ecotype).